A 181-amino-acid chain; its full sequence is Oligoribonuclease (181 aa).

In terms of domain architecture, Exonuclease spans 8 to 171 (LIWIDLEMTG…DDIRESVAEL (164 aa)). The active site involves Y129.

Belongs to the oligoribonuclease family.

It is found in the cytoplasm. Functionally, 3'-to-5' exoribonuclease specific for small oligoribonucleotides. This chain is Oligoribonuclease, found in Photorhabdus laumondii subsp. laumondii (strain DSM 15139 / CIP 105565 / TT01) (Photorhabdus luminescens subsp. laumondii).